Consider the following 101-residue polypeptide: Small ribosomal subunit protein uS14 (101 aa).

Belongs to the universal ribosomal protein uS14 family. As to quaternary structure, part of the 30S ribosomal subunit. Contacts proteins S3 and S10.

Functionally, binds 16S rRNA, required for the assembly of 30S particles and may also be responsible for determining the conformation of the 16S rRNA at the A site. The sequence is that of Small ribosomal subunit protein uS14 from Pseudomonas syringae pv. syringae (strain B728a).